The sequence spans 100 residues: Class II hydrophobin 4 (100 aa).

The N-terminal stretch at 1-17 (MQFYAIASLFLAGTAFA) is a signal peptide. Disulfide bonds link cysteine 29–cysteine 79, cysteine 40–cysteine 70, cysteine 41–cysteine 53, and cysteine 80–cysteine 92.

It belongs to the cerato-ulmin hydrophobin family.

Its subcellular location is the secreted. The protein localises to the cell wall. Aerial growth, conidiation, and dispersal of filamentous fungi in the environment rely upon a capability of their secreting small amphipathic proteins called hydrophobins (HPBs) with low sequence identity. Class I can self-assemble into an outermost layer of rodlet bundles on aerial cell surfaces, conferring cellular hydrophobicity that supports fungal growth, development and dispersal; whereas Class II form highly ordered films at water-air interfaces through intermolecular interactions but contribute nothing to the rodlet structure. Does not seem to be important for the ability to cause seedling disease. This Gibberella moniliformis (Maize ear and stalk rot fungus) protein is Class II hydrophobin 4.